The sequence spans 364 residues: Peptide chain release factor 1 (364 aa).

An N5-methylglutamine modification is found at Gln237.

This sequence belongs to the prokaryotic/mitochondrial release factor family. Methylated by PrmC. Methylation increases the termination efficiency of RF1.

The protein resides in the cytoplasm. In terms of biological role, peptide chain release factor 1 directs the termination of translation in response to the peptide chain termination codons UAG and UAA. In Rubrobacter xylanophilus (strain DSM 9941 / JCM 11954 / NBRC 16129 / PRD-1), this protein is Peptide chain release factor 1.